The chain runs to 89 residues: Large ribosomal subunit protein bL27 (89 aa).

The tract at residues 1 to 20 is disordered; the sequence is MAHKKAGGSSRNGRDSAGRR.

Belongs to the bacterial ribosomal protein bL27 family.

The polypeptide is Large ribosomal subunit protein bL27 (Jannaschia sp. (strain CCS1)).